A 278-amino-acid chain; its full sequence is Biotin synthase (278 aa).

Residues 1–227 (MQIMLCAISN…NAHIMVAGGR (227 aa)) form the Radical SAM core domain. [4Fe-4S] cluster contacts are provided by Cys-16, Cys-20, and Cys-23. Cys-60, Cys-95, and Cys-153 together coordinate [2Fe-2S] cluster.

This sequence belongs to the radical SAM superfamily. Biotin synthase family. Homodimer. It depends on [4Fe-4S] cluster as a cofactor. Requires [2Fe-2S] cluster as cofactor.

It catalyses the reaction (4R,5S)-dethiobiotin + (sulfur carrier)-SH + 2 reduced [2Fe-2S]-[ferredoxin] + 2 S-adenosyl-L-methionine = (sulfur carrier)-H + biotin + 2 5'-deoxyadenosine + 2 L-methionine + 2 oxidized [2Fe-2S]-[ferredoxin]. The protein operates within cofactor biosynthesis; biotin biosynthesis; biotin from 7,8-diaminononanoate: step 2/2. Functionally, catalyzes the conversion of dethiobiotin (DTB) to biotin by the insertion of a sulfur atom into dethiobiotin via a radical-based mechanism. This is Biotin synthase from Campylobacter lari (strain RM2100 / D67 / ATCC BAA-1060).